Reading from the N-terminus, the 305-residue chain is NADH-ubiquinone oxidoreductase chain 1 (305 aa).

8 helical membrane passes run 3–23 (WVAV…VGFY), 71–91 (VGPF…GWLL), 99–119 (VFYV…VYGV), 145–165 (YEIP…VFMF), 175–195 (LFFF…CMLA), 221–241 (GGGF…SSVM), 246–266 (FFGG…IFFV), and 285–305 (WTVL…LVGV).

The protein belongs to the complex I subunit 1 family.

The protein resides in the mitochondrion inner membrane. The enzyme catalyses a ubiquinone + NADH + 5 H(+)(in) = a ubiquinol + NAD(+) + 4 H(+)(out). Core subunit of the mitochondrial membrane respiratory chain NADH dehydrogenase (Complex I) that is believed to belong to the minimal assembly required for catalysis. Complex I functions in the transfer of electrons from NADH to the respiratory chain. The immediate electron acceptor for the enzyme is believed to be ubiquinone. The sequence is that of NADH-ubiquinone oxidoreductase chain 1 (ND1) from Mytilus edulis (Blue mussel).